Here is a 141-residue protein sequence, read N- to C-terminus: Small ribosomal subunit protein uS11 (141 aa).

It belongs to the universal ribosomal protein uS11 family. In terms of assembly, part of the 30S ribosomal subunit.

In terms of biological role, located on the platform of the 30S subunit. This chain is Small ribosomal subunit protein uS11, found in Pyrobaculum calidifontis (strain DSM 21063 / JCM 11548 / VA1).